A 255-amino-acid polypeptide reads, in one-letter code: Staphylococcal secretory antigen ssaA1 (255 aa).

An N-terminal signal peptide occupies residues 1–26 (MKKIVTATIATAGLATIAFAGHDAQA). 3 consecutive repeat copies span residues 75-78 (YNNY), 88-91 (YNNY), and 98-101 (YNNY). The tract at residues 75 to 101 (YNNYNTYSYNNASYNNYYNHSYQYNNY) is 3 X 4 AA repeats of Y-N-N-Y. One can recognise a Peptidase C51 domain in the interval 134-255 (AAPSSNGRSI…NQAGSYNFIH (122 aa)).

It localises to the secreted. Not known; immunogenic protein. In Staphylococcus aureus (strain MW2), this protein is Staphylococcal secretory antigen ssaA1 (ssaA1).